A 132-amino-acid chain; its full sequence is Histone H2A.2 (132 aa).

At Ser2 the chain carries N-acetylserine. Lys5 and Lys8 each carry N6-acetyllysine. An N6-succinyllysine mark is found at Lys14 and Lys22. Residue Gln106 is modified to N5-methylglutamine. Lys120 bears the N6-malonyllysine mark. Lys127 is covalently cross-linked (Glycyl lysine isopeptide (Lys-Gly) (interchain with G-Cter in SUMO)). Ser129 is modified (phosphoserine). The short motif at 129–130 (SQ) is the [ST]-Q motif element.

Belongs to the histone H2A family. As to quaternary structure, the nucleosome is a histone octamer containing two molecules each of H2A, H2B, H3 and H4 assembled in one H3-H4 heterotetramer and two H2A-H2B heterodimers. The octamer wraps approximately 147 bp of DNA. Interacts with NAP1. In terms of processing, phosphorylated to form H2AS128ph (gamma-H2A) in response to DNA double-strand breaks (DSBs) generated by exogenous genotoxic agents and by stalled replication forks. Phosphorylation is dependent on the DNA damage checkpoint kinases MEC1/ATR and TEL1/ATM, spreads on either side of a detected DSB site and may mark the surrounding chromatin for recruitment of proteins required for DNA damage signaling and repair. Gamma-H2A interacts with ARP4, a shared component of the NuA4 histone acetyltransferase complex and the INO80 and SWR1 chromatin remodeling complexes, and serves to recruit first NuA4, mediating histone H4 acetylation, and subsequently the INO80/SWR1 complexes, facilitating DNA resection, to DSB sites. Gamma-H2A is required for sequestering cohesin around the break site, which is important for efficient post-replicative double-strand break repair by homologous recombination, holding the damaged chromatid close to its undamaged sister template. Gamma-H2A is removed from the DNA prior to the strand invasion-primer extension step of the repair process and subsequently dephosphorylated by PPH3, a component of the histone H2A phosphatase complex (HTP-C). Dephosphorylation is necessary for efficient recovery from the DNA damage checkpoint. Post-translationally, N-acetylated by NAT4. Acetylated by ESA1, a component of the NuA4 histone acetyltransferase (HAT) complex, to form H2AK4ac and H2AK7ac. In terms of processing, glutamine methylation at Gln-106 (H2AQ105me) by NOP1 is specifically dedicated to polymerase I. It is present at 35S ribosomal DNA locus and impairs binding of the FACT complex. Post-translationally, sumoylated to from H2AK126su. May lead to transcriptional repression.

It is found in the nucleus. Its subcellular location is the chromosome. Functionally, core component of nucleosome which plays a central role in DNA double strand break (DSB) repair. Nucleosomes wrap and compact DNA into chromatin, limiting DNA accessibility to the cellular machineries which require DNA as a template. Histones thereby play a central role in transcription regulation, DNA repair, DNA replication and chromosomal stability. DNA accessibility is regulated via a complex set of post-translational modifications of histones, also called histone code, and nucleosome remodeling. This is Histone H2A.2 (HTA2) from Saccharomyces cerevisiae (strain ATCC 204508 / S288c) (Baker's yeast).